A 200-amino-acid chain; its full sequence is Large ribosomal subunit protein uL4 (200 aa).

Residues 43–72 (RAQKTRAEVSGSGKKPWRQKGTGRARSGDI) are disordered.

The protein belongs to the universal ribosomal protein uL4 family. As to quaternary structure, part of the 50S ribosomal subunit.

Its function is as follows. One of the primary rRNA binding proteins, this protein initially binds near the 5'-end of the 23S rRNA. It is important during the early stages of 50S assembly. It makes multiple contacts with different domains of the 23S rRNA in the assembled 50S subunit and ribosome. In terms of biological role, forms part of the polypeptide exit tunnel. This chain is Large ribosomal subunit protein uL4, found in Haemophilus ducreyi (strain 35000HP / ATCC 700724).